Here is a 3391-residue protein sequence, read N- to C-terminus: Genome polyprotein (3391 aa).

The tract at residues 1-15 (MNNQRKKARNTPFNM) is interaction with host EXOC1. Topologically, residues 1–101 (MNNQRKKARN…LNILNRRRRT (101 aa)) are cytoplasmic. The interval 37–72 (MLQGRGPLKLFMALVAFLRFLTIPPTAGILKRWGTI) is hydrophobic; homodimerization of capsid protein C. The propeptide at 101–114 (TAGMIIMLIPTVMA) is ER anchor for the capsid protein C, removed in mature form by serine protease NS3. A helical membrane pass occupies residues 102–122 (AGMIIMLIPTVMAFHLTTRNG). The Extracellular portion of the chain corresponds to 123-238 (EPHMIVSRQE…GAWKHAQRIE (116 aa)). Asparagine 183 carries an N-linked (GlcNAc...) asparagine; by host glycan. The helical transmembrane segment at 239–259 (TWILRHPGFTIMAAILAYTIG) threads the bilayer. The Cytoplasmic segment spans residues 260–265 (TTHFQR). Residues 266–280 (ALIFILLTAVAPSMT) traverse the membrane as a helical segment. Residues 281 to 725 (MRCIGISNRD…LHQVFGAIYG (445 aa)) are Extracellular-facing. Intrachain disulfides connect cysteine 283/cysteine 310, cysteine 340/cysteine 401, cysteine 354/cysteine 385, and cysteine 372/cysteine 396. Asparagine 347 is a glycosylation site (N-linked (GlcNAc...) asparagine; by host). Positions 378-391 (DRGWGNGCGLFGKG) are fusion peptide. An N-linked (GlcNAc...) asparagine; by host glycan is attached at asparagine 433. 2 disulfide bridges follow: cysteine 465/cysteine 565 and cysteine 582/cysteine 613. Residues 726–746 (AAFSGVSWIMKILIGVIITWI) traverse the membrane as a helical segment. At 747-752 (GMNSRS) the chain is on the cytoplasmic side. The helical transmembrane segment at 753 to 773 (TSLSVSLVLVGVVTLYLGVMV) threads the bilayer. The Extracellular portion of the chain corresponds to 774–1195 (QADSGCVVSW…MVGATMTDDI (422 aa)). 6 cysteine pairs are disulfide-bonded: cysteine 779/cysteine 790, cysteine 830/cysteine 918, cysteine 954/cysteine 998, cysteine 1055/cysteine 1104, cysteine 1066/cysteine 1088, and cysteine 1087/cysteine 1091. 2 N-linked (GlcNAc...) asparagine; by host glycosylation sites follow: asparagine 905 and asparagine 982. A helical transmembrane segment spans residues 1196–1220 (GMGVTYLALLAAFKVRPTFAAGLLL). At 1221–1226 (RKLTSK) the chain is on the cytoplasmic side. Residues 1227-1245 (ELMMTTIGIVLLSQSTIPE) traverse the membrane as a helical segment. Over 1246–1269 (TILELTDALALGMMVLKMVRKMEK) the chain is Lumenal. The chain crosses the membrane as a helical span at residues 1270–1290 (YQLAVTIMAILCVPNAVILQN). Alanine 1291 is a topological domain (cytoplasmic). Residues 1292 to 1310 (WKVSCTILAVVSVSPLFLT) traverse the membrane as a helical segment. The Lumenal segment spans residues 1311–1317 (SSQQKAD). The helical transmembrane segment at 1318–1338 (WIPLALTIKGLNPTAIFLTTL) threads the bilayer. The Cytoplasmic portion of the chain corresponds to 1339–1346 (SRTNKKRS). Residues 1347-1367 (WPLNEAIMAVGMVSILASSLL) form a helical membrane-spanning segment. At 1368 to 1370 (KND) the chain is on the lumenal side. A helical transmembrane segment spans residues 1371-1391 (IPMTGPLVAGGLLTVCYVLTG). Residues 1392–1447 (RSADLELERAADVKWEDQAEISGSSPILSITISEDGSMSIKNEEEEQTLTILIRTG) are Cytoplasmic-facing. The segment at 1398–1437 (LERAADVKWEDQAEISGSSPILSITISEDGSMSIKNEEEE) is interacts with and activates NS3 protease. The segment at residues 1448 to 1468 (LLVISGLFPVSIPITAAAWYL) is an intramembrane region (helical). At 1469 to 2147 (WEVKKQRAGV…LSELPETLET (679 aa)) the chain is on the cytoplasmic side. The Peptidase S7 domain occupies 1476–1653 (AGVLWDVPSP…EKSIEDNPEI (178 aa)). Catalysis depends on charge relay system; for serine protease NS3 activity residues histidine 1526, aspartate 1550, and serine 1610. The Helicase ATP-binding domain occupies 1655-1811 (DDIFRKRKLT…QSNAPIMDEE (157 aa)). Residues 1659 to 1662 (RKRK) form an important for RNA-binding region. 1668 to 1675 (LHPGAGKT) contacts ATP. A DEAH box motif is present at residues 1759–1762 (DEAH). Residues 1821–1988 (SGHEWVTDFK…IIPSMFEPER (168 aa)) form the Helicase C-terminal domain. Lysine 1863 carries the N6-acetyllysine; by host modification. The helical transmembrane segment at 2148–2168 (LLLLTLLATVTGGIFLFLMSG) threads the bilayer. Residues 2169-2170 (RG) lie on the Lumenal side of the membrane. An intramembrane region (helical) is located at residues 2171-2191 (IGKMTLGMCCIITASILLWYA). Glutamine 2192 is a topological domain (lumenal). The chain crosses the membrane as a helical span at residues 2193–2213 (IQPHWIAASIILEFFLIVLLI). At 2214–2228 (PEPEKQRTPQDNQLT) the chain is on the cytoplasmic side. Residues 2229–2249 (YVVIAILTVVAATMANEMGFL) traverse the membrane as a helical segment. The Lumenal segment spans residues 2250–2274 (EKTKKDLGLGSITTQQPESNILDID). An intramembrane region (helical) is located at residues 2275–2295 (LRPASAWTLYAVATTFVTPML). Residues 2296 to 2316 (RHSIENSSVNVSLTAIANQAT) are Lumenal-facing. Asparagine 2301 and asparagine 2305 each carry an N-linked (GlcNAc...) asparagine; by host glycan. The helical intramembrane region spans 2317–2337 (VLMGLGKGWPLSKMDIGVPLL). Over 2338-2347 (AIGCYSQVNP) the chain is Lumenal. Residues 2348–2368 (ITLTAALFLLVAHYAIIGPGL) form a helical membrane-spanning segment. The Cytoplasmic portion of the chain corresponds to 2369–2413 (QAKATREAQKRAAAGIMKNPTVDGITVIDLDPIPYDPKFEKQLGQ). A helical membrane pass occupies residues 2414–2434 (VMLLVLCVTQVLMMRTTWALC). The Lumenal portion of the chain corresponds to 2435–2459 (EALTLATGPISTLWEGNPGRFWNTT). Asparagine 2457 carries an N-linked (GlcNAc...) asparagine; by host glycan. The chain crosses the membrane as a helical span at residues 2460–2480 (IAVSMANIFRGSYLAGAGLLF). Over 2481–3391 (SIMKNTTNTR…KEEEEAGVLW (911 aa)) the chain is Cytoplasmic. The mRNA cap 0-1 NS5-type MT domain occupies 2493 to 2755 (TGNIGETLGE…DVDLGSGTRN (263 aa)). Serine 2547 is a binding site for S-adenosyl-L-methionine. Serine 2547 is modified (phosphoserine). The active-site For 2'-O-MTase activity is lysine 2552. Residues 2568-2571 (VVDL) carry the SUMO-interacting motif motif. The S-adenosyl-L-methionine site is built by glycine 2577, tryptophan 2578, threonine 2595, lysine 2596, aspartate 2622, and valine 2623. Aspartate 2637 serves as the catalytic For 2'-O-MTase activity. Isoleucine 2638 contacts S-adenosyl-L-methionine. Active-site for 2'-O-MTase activity residues include lysine 2672 and glutamate 2708. Tyrosine 2710 serves as a coordination point for S-adenosyl-L-methionine. Positions 2929, 2933, 2938, and 2941 each coordinate Zn(2+). Positions 3019 to 3168 (GAMYADDTAG…KPLDDRFASA (150 aa)) constitute a RdRp catalytic domain. Zn(2+) is bound by residues histidine 3203, cysteine 3219, and cysteine 3338.

In the N-terminal section; belongs to the class I-like SAM-binding methyltransferase superfamily. mRNA cap 0-1 NS5-type methyltransferase family. In terms of assembly, homodimer. Interacts (via N-terminus) with host EXOC1 (via C-terminus); this interaction results in EXOC1 degradation through the proteasome degradation pathway. Forms heterodimers with envelope protein E in the endoplasmic reticulum and Golgi. As to quaternary structure, homodimer; in the endoplasmic reticulum and Golgi. Interacts with protein prM. Interacts with non-structural protein 1. In terms of assembly, homodimer; Homohexamer when secreted. Interacts with envelope protein E. Interacts with host PRKAA1. Interacts (via N-terminus) with serine protease NS3. As to quaternary structure, forms a heterodimer with serine protease NS3. May form homooligomers. In terms of assembly, forms a heterodimer with NS2B. Interacts with NS4B. Interacts with unphosphorylated RNA-directed RNA polymerase NS5; this interaction stimulates RNA-directed RNA polymerase NS5 guanylyltransferase activity. Interacts with host SHFL. Interacts with host MAVS; this interaction inhibits the synthesis of IFN-beta. Interacts with host MAVS; this interaction inhibits the synthesis of IFN-beta. Interacts with host SHFL. Interacts with host AUP1; the interaction occurs in the presence of Dengue virus NS4B and induces lipophagy which facilitates production of virus progeny particles. May interact with host SRPRA and SEC61G. As to quaternary structure, interacts with serine protease NS. In terms of assembly, homodimer. Interacts with host STAT2; this interaction inhibits the phosphorylation of the latter, and, when all viral proteins are present (polyprotein), targets STAT2 for degradation. Interacts with serine protease NS3. Interacts with host PAF1 complex; the interaction may prevent the recruitment of the PAF1 complex to interferon-responsive genes, and thus reduces the immune response. Post-translationally, specific enzymatic cleavages in vivo yield mature proteins. Cleavages in the lumen of endoplasmic reticulum are performed by host signal peptidase, whereas cleavages in the cytoplasmic side are performed by serine protease NS3. Signal cleavage at the 2K-4B site requires a prior NS3 protease-mediated cleavage at the 4A-2K site. In terms of processing, cleaved in post-Golgi vesicles by a host furin, releasing the mature small envelope protein M, and peptide pr. This cleavage is incomplete as up to 30% of viral particles still carry uncleaved prM. N-glycosylated. Post-translationally, N-glycosylated. The excreted form is glycosylated and this is required for efficient secretion of the protein from infected cells. In terms of processing, acetylated by host KAT5. Acetylation modulates NS3 RNA-binding and unwinding activities and plays an important positive role for viral replication. Sumoylation of RNA-directed RNA polymerase NS5 increases NS5 protein stability allowing proper viral RNA replication. Post-translationally, phosphorylated on serines residues. This phosphorylation may trigger NS5 nuclear localization.

It localises to the virion. It is found in the host nucleus. Its subcellular location is the host cytoplasm. The protein localises to the host perinuclear region. The protein resides in the secreted. It localises to the virion membrane. It is found in the host endoplasmic reticulum membrane. Its subcellular location is the host mitochondrion. The enzyme catalyses Selective hydrolysis of -Xaa-Xaa-|-Yaa- bonds in which each of the Xaa can be either Arg or Lys and Yaa can be either Ser or Ala.. It catalyses the reaction RNA(n) + a ribonucleoside 5'-triphosphate = RNA(n+1) + diphosphate. The catalysed reaction is a ribonucleoside 5'-triphosphate + H2O = a ribonucleoside 5'-diphosphate + phosphate + H(+). It carries out the reaction ATP + H2O = ADP + phosphate + H(+). The enzyme catalyses a 5'-end (5'-triphosphoguanosine)-ribonucleoside in mRNA + S-adenosyl-L-methionine = a 5'-end (N(7)-methyl 5'-triphosphoguanosine)-ribonucleoside in mRNA + S-adenosyl-L-homocysteine. It catalyses the reaction a 5'-end (N(7)-methyl 5'-triphosphoguanosine)-ribonucleoside in mRNA + S-adenosyl-L-methionine = a 5'-end (N(7)-methyl 5'-triphosphoguanosine)-(2'-O-methyl-ribonucleoside) in mRNA + S-adenosyl-L-homocysteine + H(+). In terms of biological role, plays a role in virus budding by binding to the cell membrane and gathering the viral RNA into a nucleocapsid that forms the core of a mature virus particle. During virus entry, may induce genome penetration into the host cytoplasm after hemifusion induced by the surface proteins. Can migrate to the cell nucleus where it modulates host functions. Overcomes the anti-viral effects of host EXOC1 by sequestering and degrading the latter through the proteasome degradation pathway. Its function is as follows. Inhibits RNA silencing by interfering with host Dicer. Prevents premature fusion activity of envelope proteins in trans-Golgi by binding to envelope protein E at pH6.0. After virion release in extracellular space, gets dissociated from E dimers. Functionally, acts as a chaperone for envelope protein E during intracellular virion assembly by masking and inactivating envelope protein E fusion peptide. prM is the only viral peptide matured by host furin in the trans-Golgi network probably to avoid catastrophic activation of the viral fusion activity in acidic Golgi compartment prior to virion release. prM-E cleavage is inefficient, and many virions are only partially matured. These uncleaved prM would play a role in immune evasion. In terms of biological role, may play a role in virus budding. Exerts cytotoxic effects by activating a mitochondrial apoptotic pathway through M ectodomain. May display a viroporin activity. Its function is as follows. Binds to host cell surface receptor and mediates fusion between viral and cellular membranes. Envelope protein is synthesized in the endoplasmic reticulum in the form of heterodimer with protein prM. They play a role in virion budding in the ER, and the newly formed immature particle is covered with 60 spikes composed of heterodimer between precursor prM and envelope protein E. The virion is transported to the Golgi apparatus where the low pH causes dissociation of PrM-E heterodimers and formation of E homodimers. prM-E cleavage is inefficient, and many virions are only partially matured. These uncleaved prM would play a role in immune evasion. Involved in immune evasion, pathogenesis and viral replication. Once cleaved off the polyprotein, is targeted to three destinations: the viral replication cycle, the plasma membrane and the extracellular compartment. Essential for viral replication. Required for formation of the replication complex and recruitment of other non-structural proteins to the ER-derived membrane structures. Excreted as a hexameric lipoparticle that plays a role against host immune response. Antagonizing the complement function. Binds to the host macrophages and dendritic cells. Inhibits signal transduction originating from Toll-like receptor 3 (TLR3). Mediates complement activation, which may contribute to the pathogenesis of the vascular leakage that occurs in severe dengue disease. Activates autophagy through the AMPK/ERK/mTOR signaling pathway. Mechanistically, acts as the assembly platform for STK11-AMPK interactions and promotes STK11-AMPK interactions. In turn, promotes phosphorylation of the AMPK kinase structural domain and activates AMPK, thereby positively regulating the AMPK/ERK/mTOR signaling pathway and inducing autophagy. Functionally, disrupts the host endothelial glycocalyx layer of host pulmonary microvascular endothelial cells, inducing degradation of sialic acid and shedding of heparan sulfate proteoglycans. NS1 induces expression of sialidases, heparanase, and activates cathepsin L, which activates heparanase via enzymatic cleavage. These effects are probably linked to the endothelial hyperpermeability observed in severe dengue disease. In terms of biological role, component of the viral RNA replication complex that functions in virion assembly and antagonizes the host immune response. Its function is as follows. Required cofactor for the serine protease function of NS3. May have membrane-destabilizing activity and form viroporins. Displays three enzymatic activities: serine protease, NTPase and RNA helicase. NS3 serine protease, in association with NS2B, performs its autocleavage and cleaves the polyprotein at dibasic sites in the cytoplasm: C-prM, NS2A-NS2B, NS2B-NS3, NS3-NS4A, NS4A-2K and NS4B-NS5. NS3 RNA helicase binds RNA and unwinds dsRNA in the 3' to 5' direction. Functionally, regulates the ATPase activity of the NS3 helicase activity. NS4A allows NS3 helicase to conserve energy during unwinding. Plays a role in the inhibition of the host innate immune response. Interacts with host MAVS and thereby prevents the interaction between RIGI and MAVS. In turn, IFN-beta production is impaired. Interacts with host AUP1 which mediates induction of lipophagy in host cells and facilitates production of virus progeny particles. In terms of biological role, functions as a signal peptide for NS4B and is required for the interferon antagonism activity of the latter. Its function is as follows. Induces the formation of ER-derived membrane vesicles where the viral replication takes place. Inhibits interferon (IFN)-induced host STAT1 phosphorylation and nuclear translocation, thereby preventing the establishment of cellular antiviral state by blocking the IFN-alpha/beta pathway. Replicates the viral (+) and (-) RNA genome, and performs the capping of genomes in the cytoplasm. NS5 methylates viral RNA cap at guanine N-7 and ribose 2'-O positions. Besides its role in RNA genome replication, also prevents the establishment of cellular antiviral state by blocking the interferon-alpha/beta (IFN-alpha/beta) signaling pathway. Inhibits host TYK2 and STAT2 phosphorylation, thereby preventing activation of JAK-STAT signaling pathway. May reduce immune responses by preventing the recruitment of the host PAF1 complex to interferon-responsive genes. The polypeptide is Genome polyprotein (Aedimorphus (Red guenon)).